Reading from the N-terminus, the 461-residue chain is Spermidine coumaroyl-CoA acyltransferase (461 aa).

Catalysis depends on proton acceptor residues H168 and D393.

It belongs to the plant acyltransferase family. In terms of assembly, monomer. As to expression, mainly expressed in roots at low levels, specifically, in the root tip.

It carries out the reaction 2 (E)-4-coumaroyl-CoA + spermidine = N(1),N(8)-bis(coumaroyl)-spermidine + 2 CoA + 2 H(+). Its pathway is amine and polyamine metabolism; spermidine metabolism. Spermidine coumaroyl-CoA acyltransferase that mediates the conversion of spermidine into dicoumaroyl-spermidine. The protein is Spermidine coumaroyl-CoA acyltransferase of Arabidopsis thaliana (Mouse-ear cress).